A 202-amino-acid chain; its full sequence is Putative transposon Tn552 DNA-invertase bin3 (202 aa).

The Resolvase/invertase-type recombinase catalytic domain maps to 1–143 (MIIGYARVSS…QGIQVAKEKG (143 aa)). Residue serine 9 is the O-(5'-phospho-DNA)-serine intermediate of the active site.

It belongs to the site-specific recombinase resolvase family.

Functionally, potential DNA invertase. The chain is Putative transposon Tn552 DNA-invertase bin3 (bin3) from Staphylococcus aureus.